The sequence spans 395 residues: Tryptophan--tRNA ligase, cytoplasmic (395 aa).

The 'HIGH' region signature appears at 91 to 100 (PSSDSMHLGH). The 'KMSKS' region signature appears at 275–279 (KMSAS). Residues T288 and T290 each carry the phosphothreonine modification.

This sequence belongs to the class-I aminoacyl-tRNA synthetase family.

It is found in the cytoplasm. It catalyses the reaction tRNA(Trp) + L-tryptophan + ATP = L-tryptophyl-tRNA(Trp) + AMP + diphosphate + H(+). The chain is Tryptophan--tRNA ligase, cytoplasmic (wrs1) from Schizosaccharomyces pombe (strain 972 / ATCC 24843) (Fission yeast).